We begin with the raw amino-acid sequence, 163 residues long: MSGLIQAAKSLLLLEFVSAFFLAMRQFFSPKPTINYPYEKGVVSQRFRGEHALRRYPNGEERCIACKLCEAICPAQAITIEAGPRGNDGTRRTVRYDIDMVKCIYCGFCQEACPVEAIVEGPNFEFATEMREELYYDKEKLLMNGDRWEREIARNILIDAPYR.

4Fe-4S ferredoxin-type domains follow at residues 53–83 and 94–123; these read LRRYPNGEERCIACKLCEAICPAQAITIEAG and VRYDIDMVKCIYCGFCQEACPVEAIVEGPN. Residues Cys63, Cys66, Cys69, Cys73, Cys103, Cys106, Cys109, and Cys113 each coordinate [4Fe-4S] cluster.

Belongs to the complex I 23 kDa subunit family. NDH-1 is composed of 14 different subunits. Subunits NuoA, H, J, K, L, M, N constitute the membrane sector of the complex. [4Fe-4S] cluster is required as a cofactor.

The protein resides in the cell inner membrane. The catalysed reaction is a quinone + NADH + 5 H(+)(in) = a quinol + NAD(+) + 4 H(+)(out). Functionally, NDH-1 shuttles electrons from NADH, via FMN and iron-sulfur (Fe-S) centers, to quinones in the respiratory chain. The immediate electron acceptor for the enzyme in this species is believed to be ubiquinone. Couples the redox reaction to proton translocation (for every two electrons transferred, four hydrogen ions are translocated across the cytoplasmic membrane), and thus conserves the redox energy in a proton gradient. This is NADH-quinone oxidoreductase subunit I from Bartonella quintana (strain Toulouse) (Rochalimaea quintana).